The sequence spans 238 residues: Phosphatidylcholine synthase (238 aa).

Residues 1–16 (MPVNLSMTPINKAKAW) lie on the Cytoplasmic side of the membrane. Residues 17–37 (GVHAVTASGVILALLALLALV) traverse the membrane as a helical segment. At 38 to 41 (DNKP) the chain is on the periplasmic side. A helical transmembrane segment spans residues 42 to 62 (QACLLWLGLALLVDGLDGTLA). Topologically, residues 63–75 (RKYEVKEMLPHFD) are cytoplasmic. A helical transmembrane segment spans residues 76–96 (GSVLDLVIDYLTYVFIPAIFI). Residues 97 to 104 (YRYIPLPE) are Periplasmic-facing. Residues 105–125 (HFELLAVGVILVSSLFCFCNV) traverse the membrane as a helical segment. Over 126–132 (NMKSTDN) the chain is Cytoplasmic. A helical transmembrane segment spans residues 133–153 (YFVGFPAAWNVVAVYFYVLDL). Over 154 to 155 (HP) the chain is Periplasmic. The chain crosses the membrane as a helical span at residues 156 to 176 (WVNLATVLVLAALTLTRMKFL). Topologically, residues 177 to 183 (HPFRVRQ) are cytoplasmic. A helical membrane pass occupies residues 184–204 (FMPLNIAVTFVWLISSGLLIV). The Periplasmic portion of the chain corresponds to 205 to 209 (QQPAD). The helical transmembrane segment at 210-230 (LPILLGLWFAASAYFVGICLW) threads the bilayer. Over 231 to 238 (RSAREWFG) the chain is Cytoplasmic.

The protein belongs to the CDP-alcohol phosphatidyltransferase class-I family. It depends on Mn(2+) as a cofactor.

The protein resides in the cell inner membrane. It catalyses the reaction a CDP-1,2-diacyl-sn-glycerol + choline = a 1,2-diacyl-sn-glycero-3-phosphocholine + CMP + H(+). In terms of biological role, condenses choline with CDP-diglyceride to produce phosphatidylcholine and CMP. This Pseudomonas aeruginosa (strain ATCC 15692 / DSM 22644 / CIP 104116 / JCM 14847 / LMG 12228 / 1C / PRS 101 / PAO1) protein is Phosphatidylcholine synthase.